A 508-amino-acid polypeptide reads, in one-letter code: GMP synthase [glutamine-hydrolyzing] (508 aa).

Residues 1–189 (MILVLDFGSQ…ALLVCGCEKT (189 aa)) enclose the Glutamine amidotransferase type-1 domain. The Nucleophile role is filled by C78. Residues H163 and E165 contribute to the active site. A GMPS ATP-PPase domain is found at 190–383 (WGMQHFAQRE…LGVSQDFLMH (194 aa)). 217-223 (SGGVDST) lines the ATP pocket.

Homodimer.

The catalysed reaction is XMP + L-glutamine + ATP + H2O = GMP + L-glutamate + AMP + diphosphate + 2 H(+). It participates in purine metabolism; GMP biosynthesis; GMP from XMP (L-Gln route): step 1/1. In terms of biological role, catalyzes the synthesis of GMP from XMP. This chain is GMP synthase [glutamine-hydrolyzing], found in Helicobacter pylori (strain G27).